Consider the following 961-residue polypeptide: Outer capsid protein VP2 (961 aa).

This sequence belongs to the orbivirus VP2 family.

The protein resides in the virion. In terms of biological role, the VP2 protein is one of the two proteins (with VP5) which constitute the virus particle outer capsid. It is the major target of the host immunogenic response. Responsible for viral attachment to target host cell, probably by binding to sialic acid. This attachment induces virion internalization predominantly through clathrin-dependent endocytosis. In Antilocapra americana (Pronghorn), this protein is Outer capsid protein VP2 (Segment-2).